Here is a 388-residue protein sequence, read N- to C-terminus: Proline-rich protein 5 (388 aa).

Interaction with RICTOR stretches follow at residues 10 to 95 (MSSP…LTKG) and 188 to 218 (HESR…YGLH). Residues 12 to 31 (SPSLSDLGKREPAAAADERG) form a disordered region. Basic and acidic residues predominate over residues 18–31 (LGKREPAAAADERG). Ser252 carries the post-translational modification Phosphoserine. The segment at 254 to 388 (SYNTPLLNPV…EGSGGRQSVV (135 aa)) is disordered. Residues 336–346 (TRSSLPRSSPE) are compositionally biased toward polar residues.

This sequence belongs to the PROTOR family. Associated component of the mechanistic target of rapamycin complex 2 (mTORC2). Binds directly to MTOR and RICTOR within the TORC2 complex. As to expression, most abundant in kidney and liver. Also highly expressed in brain, spleen, testis and placenta. Overexpressed in several colorectal tumors.

Associated subunit of mTORC2, which regulates cell growth and survival in response to hormonal signals. mTORC2 is activated by growth factors, but, in contrast to mTORC1, seems to be nutrient-insensitive. mTORC2 seems to function upstream of Rho GTPases to regulate the actin cytoskeleton, probably by activating one or more Rho-type guanine nucleotide exchange factors. PRR5 plays an important role in regulation of PDGFRB expression and in modulation of platelet-derived growth factor signaling. May act as a tumor suppressor in breast cancer. The sequence is that of Proline-rich protein 5 (PRR5) from Homo sapiens (Human).